The sequence spans 355 residues: Probable dual-specificity RNA methyltransferase RlmN (355 aa).

The Proton acceptor role is filled by E92. One can recognise a Radical SAM core domain in the interval 98-330; sequence FHYGLSVCVT…TELGINCGVR (233 aa). C105 and C341 form a disulfide bridge. C112, C116, and C119 together coordinate [4Fe-4S] cluster. Residues 164–165, S196, 219–221, and N297 contribute to the S-adenosyl-L-methionine site; these read GE and SLH. Residue C341 is the S-methylcysteine intermediate of the active site.

This sequence belongs to the radical SAM superfamily. RlmN family. The cofactor is [4Fe-4S] cluster.

It localises to the cytoplasm. It catalyses the reaction adenosine(2503) in 23S rRNA + 2 reduced [2Fe-2S]-[ferredoxin] + 2 S-adenosyl-L-methionine = 2-methyladenosine(2503) in 23S rRNA + 5'-deoxyadenosine + L-methionine + 2 oxidized [2Fe-2S]-[ferredoxin] + S-adenosyl-L-homocysteine. The enzyme catalyses adenosine(37) in tRNA + 2 reduced [2Fe-2S]-[ferredoxin] + 2 S-adenosyl-L-methionine = 2-methyladenosine(37) in tRNA + 5'-deoxyadenosine + L-methionine + 2 oxidized [2Fe-2S]-[ferredoxin] + S-adenosyl-L-homocysteine. Its function is as follows. Specifically methylates position 2 of adenine 2503 in 23S rRNA and position 2 of adenine 37 in tRNAs. This chain is Probable dual-specificity RNA methyltransferase RlmN, found in Oceanobacillus iheyensis (strain DSM 14371 / CIP 107618 / JCM 11309 / KCTC 3954 / HTE831).